The chain runs to 304 residues: Recombination-associated protein RdgC (304 aa).

Belongs to the RdgC family.

Its subcellular location is the cytoplasm. The protein resides in the nucleoid. May be involved in recombination. The polypeptide is Recombination-associated protein RdgC (Paraburkholderia phymatum (strain DSM 17167 / CIP 108236 / LMG 21445 / STM815) (Burkholderia phymatum)).